The sequence spans 328 residues: Testis-specific serine/threonine-protein kinase 4 (328 aa).

Residues 25–293 (YEVGKAIGHG…ILDIIKDSWV (269 aa)) form the Protein kinase domain. ATP is bound by residues 31–39 (IGHGSYGSV) and Lys-54. Asp-148 (proton acceptor) is an active-site residue. Position 197 is a phosphothreonine (Thr-197).

This sequence belongs to the protein kinase superfamily. CAMK Ser/Thr protein kinase family. In terms of assembly, homodimer. Interacts with HSP90; this interaction stabilizes and activates TSSK4. Interacts with ODF2 (via C-terminus); this interaction promotes ODF2 phosphorylation on 'Ser-95'. May interact with CREM. Interacts with CREB1; this interaction facilitates phosphorylation on 'Ser-133'. Interacts with QRICH2. Requires Mg(2+) as cofactor. In terms of processing, activated by autophosphorylation on Thr-197. ODF2 potentiates the autophosphorylation activity of TSSK4 at Thr-197. Post-translationally, ubiquitinated; HSP90 activity negatively regulates ubiquitination and degradation. Expressed only in the testis.

It is found in the cytoplasmic vesicle. Its subcellular location is the secretory vesicle. The protein resides in the acrosome. The protein localises to the cell projection. It localises to the cilium. It is found in the flagellum. It catalyses the reaction L-seryl-[protein] + ATP = O-phospho-L-seryl-[protein] + ADP + H(+). It carries out the reaction L-threonyl-[protein] + ATP = O-phospho-L-threonyl-[protein] + ADP + H(+). Its activity is regulated as follows. Activated by phosphorylation on Thr-197. Functionally, serine/threonine kinase which is involved in male germ cell development and in mature sperm function. May be involved in the Cre/Creb signaling pathway. Phosphorylates CREB1 on 'Ser-133' in vitro and can stimulate Cre/Creb pathway in cells. Phosphorylates CREM on 'Ser-116' in vitro. Phosphorylates ODF2 on 'Ser-95'. This chain is Testis-specific serine/threonine-protein kinase 4, found in Homo sapiens (Human).